The chain runs to 628 residues: Isoleucine--tRNA ligase (628 aa).

The 'KMSKS' region signature appears at 505-509 (KMSKR). ATP is bound at residue Lys508.

It belongs to the class-I aminoacyl-tRNA synthetase family.

It catalyses the reaction tRNA(Ile) + L-isoleucine + ATP = L-isoleucyl-tRNA(Ile) + AMP + diphosphate. This is Isoleucine--tRNA ligase from Antonospora locustae (Microsporidian parasite).